A 201-amino-acid chain; its full sequence is Adenylyl-sulfate kinase (201 aa).

Residue 35–42 (GLSGSGKS) coordinates ATP. Catalysis depends on S109, which acts as the Phosphoserine intermediate.

This sequence belongs to the APS kinase family.

The catalysed reaction is adenosine 5'-phosphosulfate + ATP = 3'-phosphoadenylyl sulfate + ADP + H(+). The protein operates within sulfur metabolism; hydrogen sulfide biosynthesis; sulfite from sulfate: step 2/3. Catalyzes the synthesis of activated sulfate. The protein is Adenylyl-sulfate kinase of Shigella boydii serotype 18 (strain CDC 3083-94 / BS512).